The following is a 450-amino-acid chain: ATP-dependent protease ATPase subunit HslU (450 aa).

ATP-binding positions include Val29, Gly71–Glu76, Asp261, Glu328, and Arg400.

The protein belongs to the ClpX chaperone family. HslU subfamily. In terms of assembly, a double ring-shaped homohexamer of HslV is capped on each side by a ring-shaped HslU homohexamer. The assembly of the HslU/HslV complex is dependent on binding of ATP.

Its subcellular location is the cytoplasm. In terms of biological role, ATPase subunit of a proteasome-like degradation complex; this subunit has chaperone activity. The binding of ATP and its subsequent hydrolysis by HslU are essential for unfolding of protein substrates subsequently hydrolyzed by HslV. HslU recognizes the N-terminal part of its protein substrates and unfolds these before they are guided to HslV for hydrolysis. This Rickettsia felis (strain ATCC VR-1525 / URRWXCal2) (Rickettsia azadi) protein is ATP-dependent protease ATPase subunit HslU.